Here is a 631-residue protein sequence, read N- to C-terminus: tRNA uridine 5-carboxymethylaminomethyl modification enzyme MnmG (631 aa).

Residue Gly15–Gly20 coordinates FAD. The segment at Tyr214–Ser233 is disordered. Gly276–Phe290 serves as a coordination point for NAD(+).

It belongs to the MnmG family. Homodimer. Heterotetramer of two MnmE and two MnmG subunits. FAD is required as a cofactor.

It localises to the cytoplasm. In terms of biological role, NAD-binding protein involved in the addition of a carboxymethylaminomethyl (cmnm) group at the wobble position (U34) of certain tRNAs, forming tRNA-cmnm(5)s(2)U34. The sequence is that of tRNA uridine 5-carboxymethylaminomethyl modification enzyme MnmG from Lactobacillus delbrueckii subsp. bulgaricus (strain ATCC 11842 / DSM 20081 / BCRC 10696 / JCM 1002 / NBRC 13953 / NCIMB 11778 / NCTC 12712 / WDCM 00102 / Lb 14).